A 311-amino-acid chain; its full sequence is Malate dehydrogenase (311 aa).

NAD(+) is bound by residues 7 to 13 (GAAGGIG) and aspartate 34. Residues arginine 81 and arginine 87 each contribute to the substrate site. Residues asparagine 94 and 117–119 (ITN) each bind NAD(+). Substrate-binding residues include asparagine 119 and arginine 153. Catalysis depends on histidine 177, which acts as the Proton acceptor. Methionine 227 contacts NAD(+).

This sequence belongs to the LDH/MDH superfamily. MDH type 1 family. In terms of assembly, homodimer.

The catalysed reaction is (S)-malate + NAD(+) = oxaloacetate + NADH + H(+). Catalyzes the reversible oxidation of malate to oxaloacetate. This is Malate dehydrogenase from Haemophilus influenzae (strain PittGG).